Reading from the N-terminus, the 593-residue chain is MAKKGGKNNKSKKEVTPPTSDVEDEVQDKFKEMRLNAFTATGALASKESSRDVKIEQVTLTFHGKELLSDTTVEINFGRRYGLIGQNGCGKSTFFQCLAVRELPIPEHIDIFHLSEEAHPSERTALQSVIDDAEKEVKRLEVLEERLLEEQGPESEELFDVYERLENLDPTTFVPRASEILIGLGFTSQTMLKKTKDLSGGWRMRVSLAKALFIKPTLLLLDEPTNHLDLGACVWLEDYLANYDRSLIIISHSQDFLNAVCTNIIHMTQSKLKYYGGNYDNFVKTKAELEVNQMKAYHKQQEEIAHIKSFIASCGTYSNLVRQGKSKQKIIDKMEEAGLVERVQEDKIFNFSFPPCGELAPPIMHFDNVTFSYSGKEADVLYRNLDLAIDLDSRIALVGPNGAGKSTLLKLMVGQISPTQGFIKKHSHLKMARYHQHAHEVLDLTATPLDFVRSKFAHMNKDTEEWRREIGRFGVTGKAQTEAIGCMSDGIKSRLIFCLMALENPHLLLLDEPTNHLDMECIDSLALAINSFPGGMILVSHDFRLISQVAKEIWVCDNKTITKWAGDITSYKNHLKAQMRDLTKQGALASLKK.

Positions 1–10 are enriched in basic residues; the sequence is MAKKGGKNNK. The interval 1-25 is disordered; that stretch reads MAKKGGKNNKSKKEVTPPTSDVEDE. ABC transporter domains follow at residues 53-294 and 364-583; these read VKIE…VNQM and MHFD…RDLT. ATP contacts are provided by residues 85 to 92 and 399 to 406; these read GQNGCGKS and GPNGAGKS.

This sequence belongs to the ABC transporter superfamily. ABCF family. EF3 subfamily.

In Dictyostelium discoideum (Social amoeba), this protein is ABC transporter F family member 2 (abcF2).